The sequence spans 312 residues: R2-like ligand binding oxidase (312 aa).

Residues Glu-68, Glu-101, and His-104 each contribute to the Mn(2+) site. A cross-link (3-(O4'-tyrosyl)-valine (Val-Tyr)) is located at residues 71-162; it reads VTQDIQPFMA…QAQVRASVTY (92 aa). Glu-101 is a binding site for Fe cation. Residues Glu-167, Glu-202, and His-205 each coordinate Fe cation.

It belongs to the ribonucleoside diphosphate reductase small chain family. R2-like ligand binding oxidase subfamily. Homodimer. Requires Fe cation as cofactor. The cofactor is Mn(2+).

Its function is as follows. Probable oxidase that might be involved in lipid metabolism. The chain is R2-like ligand binding oxidase from Mycolicibacterium gilvum (strain PYR-GCK) (Mycobacterium gilvum (strain PYR-GCK)).